The sequence spans 419 residues: 3-isopropylmalate dehydratase large subunit (419 aa).

Residues C302, C362, and C365 each coordinate [4Fe-4S] cluster.

This sequence belongs to the aconitase/IPM isomerase family. LeuC type 2 subfamily. As to quaternary structure, heterodimer of LeuC and LeuD. Requires [4Fe-4S] cluster as cofactor.

The catalysed reaction is (2R,3S)-3-isopropylmalate = (2S)-2-isopropylmalate. It participates in amino-acid biosynthesis; L-leucine biosynthesis; L-leucine from 3-methyl-2-oxobutanoate: step 2/4. In terms of biological role, catalyzes the isomerization between 2-isopropylmalate and 3-isopropylmalate, via the formation of 2-isopropylmaleate. The polypeptide is 3-isopropylmalate dehydratase large subunit (Sulfurimonas denitrificans (strain ATCC 33889 / DSM 1251) (Thiomicrospira denitrificans (strain ATCC 33889 / DSM 1251))).